The sequence spans 312 residues: Elongation factor Ts (312 aa).

The segment at 84–87 (TDFL) is involved in Mg(2+) ion dislocation from EF-Tu.

It belongs to the EF-Ts family.

The protein localises to the cytoplasm. Its function is as follows. Associates with the EF-Tu.GDP complex and induces the exchange of GDP to GTP. It remains bound to the aminoacyl-tRNA.EF-Tu.GTP complex up to the GTP hydrolysis stage on the ribosome. The polypeptide is Elongation factor Ts (Caulobacter sp. (strain K31)).